The chain runs to 418 residues: Endoglucanase EG-II (418 aa).

The first 21 residues, M1–A21, serve as a signal peptide directing secretion. Q22 carries the pyrrolidone carboxylic acid modification. The region spanning Q22 to I57 is the CBM1 domain. The interval P58 to S91 is linker. The segment at I63–S91 is disordered. Residues G92–K418 are catalytic. A disulfide bond links C107 and C113. An N-linked (GlcNAc) asparagine glycan is attached at N124. C183 and C190 form a disulfide bridge. Catalysis depends on E239, which acts as the Proton donor/acceptor. Cystine bridges form between C323-C359 and C364-C414. E350 serves as the catalytic Nucleophile.

This sequence belongs to the glycosyl hydrolase 5 (cellulase A) family.

The protein resides in the secreted. It carries out the reaction Endohydrolysis of (1-&gt;4)-beta-D-glucosidic linkages in cellulose, lichenin and cereal beta-D-glucans.. Its function is as follows. Endoglucanase (EG) that cleaves the internal beta-1,4-glucosidic bonds in cellulose. The degradation of cellulose involves an interplay between different cellulolytic enzymes. Hydrolysis starts with EGs, which cut internal glycosidic linkages to reduce the polymerization degree of the substrate and creates new chain ends for exocellobiohydrolases (CBHs). The CBH release the disaccharide cellobiose from the non-reducing end of the cellulose polymer chain. Finally, beta-1,4-glucosidases hydrolyze the cellobiose and other short cello-oligosaccharides into glucose units. The polypeptide is Endoglucanase EG-II (egl2) (Hypocrea jecorina (strain ATCC 56765 / BCRC 32924 / NRRL 11460 / Rut C-30) (Trichoderma reesei)).